The following is a 192-amino-acid chain: Crossover junction endodeoxyribonuclease RuvC (192 aa).

Catalysis depends on residues D9, E70, and D143. D9, E70, and D143 together coordinate Mg(2+). The interval 161-192 is disordered; sequence GASVATTGPGSSSLTPAQRAWAEAEAKARRAR. The span at 163 to 176 shows a compositional bias: polar residues; the sequence is SVATTGPGSSSLTP. Residues 182–192 are compositionally biased toward basic and acidic residues; the sequence is AEAEAKARRAR.

Belongs to the RuvC family. As to quaternary structure, homodimer which binds Holliday junction (HJ) DNA. The HJ becomes 2-fold symmetrical on binding to RuvC with unstacked arms; it has a different conformation from HJ DNA in complex with RuvA. In the full resolvosome a probable DNA-RuvA(4)-RuvB(12)-RuvC(2) complex forms which resolves the HJ. It depends on Mg(2+) as a cofactor.

Its subcellular location is the cytoplasm. The enzyme catalyses Endonucleolytic cleavage at a junction such as a reciprocal single-stranded crossover between two homologous DNA duplexes (Holliday junction).. The RuvA-RuvB-RuvC complex processes Holliday junction (HJ) DNA during genetic recombination and DNA repair. Endonuclease that resolves HJ intermediates. Cleaves cruciform DNA by making single-stranded nicks across the HJ at symmetrical positions within the homologous arms, yielding a 5'-phosphate and a 3'-hydroxyl group; requires a central core of homology in the junction. The consensus cleavage sequence is 5'-(A/T)TT(C/G)-3'. Cleavage occurs on the 3'-side of the TT dinucleotide at the point of strand exchange. HJ branch migration catalyzed by RuvA-RuvB allows RuvC to scan DNA until it finds its consensus sequence, where it cleaves and resolves the cruciform DNA. In Pseudarthrobacter chlorophenolicus (strain ATCC 700700 / DSM 12829 / CIP 107037 / JCM 12360 / KCTC 9906 / NCIMB 13794 / A6) (Arthrobacter chlorophenolicus), this protein is Crossover junction endodeoxyribonuclease RuvC.